The following is a 216-amino-acid chain: ATP-dependent Clp protease proteolytic subunit (216 aa).

The active-site Nucleophile is the Ser120. Residue His145 is part of the active site.

The protein belongs to the peptidase S14 family. In terms of assembly, fourteen ClpP subunits assemble into 2 heptameric rings which stack back to back to give a disk-like structure with a central cavity, resembling the structure of eukaryotic proteasomes.

The protein localises to the cytoplasm. The catalysed reaction is Hydrolysis of proteins to small peptides in the presence of ATP and magnesium. alpha-casein is the usual test substrate. In the absence of ATP, only oligopeptides shorter than five residues are hydrolyzed (such as succinyl-Leu-Tyr-|-NHMec, and Leu-Tyr-Leu-|-Tyr-Trp, in which cleavage of the -Tyr-|-Leu- and -Tyr-|-Trp bonds also occurs).. Functionally, cleaves peptides in various proteins in a process that requires ATP hydrolysis. Has a chymotrypsin-like activity. Plays a major role in the degradation of misfolded proteins. This is ATP-dependent Clp protease proteolytic subunit from Cupriavidus pinatubonensis (strain JMP 134 / LMG 1197) (Cupriavidus necator (strain JMP 134)).